The chain runs to 1424 residues: DNA-directed RNA polymerase subunit beta' (1424 aa).

Residues Cys60, Cys62, Cys75, and Cys78 each contribute to the Zn(2+) site. Mg(2+)-binding residues include Asp449, Asp451, and Asp453. 4 residues coordinate Zn(2+): Cys783, Cys857, Cys864, and Cys867.

The protein belongs to the RNA polymerase beta' chain family. The RNAP catalytic core consists of 2 alpha, 1 beta, 1 beta' and 1 omega subunit. When a sigma factor is associated with the core the holoenzyme is formed, which can initiate transcription. It depends on Mg(2+) as a cofactor. Requires Zn(2+) as cofactor.

It carries out the reaction RNA(n) + a ribonucleoside 5'-triphosphate = RNA(n+1) + diphosphate. Functionally, DNA-dependent RNA polymerase catalyzes the transcription of DNA into RNA using the four ribonucleoside triphosphates as substrates. The sequence is that of DNA-directed RNA polymerase subunit beta' from Treponema denticola (strain ATCC 35405 / DSM 14222 / CIP 103919 / JCM 8153 / KCTC 15104).